The primary structure comprises 192 residues: Small ribosomal subunit protein eS7 (192 aa).

It belongs to the eukaryotic ribosomal protein eS7 family.

In Anopheles gambiae (African malaria mosquito), this protein is Small ribosomal subunit protein eS7 (RpS7).